The following is a 533-amino-acid chain: Probable RNA-binding protein 46 (533 aa).

RRM domains follow at residues 61–139 (CEVF…VSLD), 141–223 (CRLF…WADP), and 236–308 (KVLY…LAKP).

In terms of assembly, interacts with YTHDC2, MEIOC, MOV10, CNOT6L, DDX4, UPF1 and PABPC1.

Its subcellular location is the cytoplasm. Essential for male and female fertility, playing a crucial role in regulating germ cell development by ensuring the proper progression of meiosis prophase I. Regulates mitotic-to-meiotic transition in spermatogenesis by forming a complex with MEIOC and YTHDC2 which recognizes and down-regulates mitotic transcripts for a successful meiotic entry. Required for normal synaptonemal complex formation during meiosis, binding meiotic cohesin subunit mRNAs containing GCCUAU/GUUCGA motifs in their 3'UTRs regions and positively regulating their translation. Required for spermatogonial differentiation in both developing and adult testis. This chain is Probable RNA-binding protein 46 (RBM46), found in Homo sapiens (Human).